Reading from the N-terminus, the 399-residue chain is Protein DDI1 homolog 2 (399 aa).

In terms of domain architecture, Ubiquitin-like spans 1–81 (MLLTVYCVRR…VILRQKENAD (81 aa)). The segment at 99 to 134 (IAVPGTSSPRQRQPPGTQQSHSSPGEITSSPQGLDN) is disordered. Positions 103–131 (GTSSPRQRQPPGTQQSHSSPGEITSSPQG) are enriched in polar residues. Threonine 104 carries the phosphothreonine modification. Serine 106, serine 121, serine 128, serine 150, and serine 194 each carry phosphoserine. Residue aspartate 252 is part of the active site. Positions 376-395 (EEIADQELAEALQKSAEDAE) match the Ubiquitin-binding motif.

The protein belongs to the DDI1 family. As to quaternary structure, homodimer. Interacts with MCM6; PCNA; PSMD4; PSMD8; RPA2 and RPN2. Interacts with RTF2.

The protein localises to the cytoplasm. The protein resides in the cytosol. It is found in the chromosome. In terms of biological role, aspartic protease that mediates the cleavage of NFE2L1/NRF1 at 'Leu-104', thereby promoting release of NFE2L1/NRF1 from the endoplasmic reticulum membrane. Ubiquitination of NFE2L1/NRF1 is a prerequisite for cleavage, suggesting that DDI2 specifically recognizes and binds ubiquitinated NFE2L1/NRF1. Seems to act as a proteasomal shuttle which links the proteasome and replication fork proteins like RTF2. Required, with DDI1, for cellular survival following replication stress. Together or redudantly with DDI1, removes RTF2 from stalled forks to allow cell cycle progression after replication stress and maintains genome integrity. This chain is Protein DDI1 homolog 2, found in Homo sapiens (Human).